The primary structure comprises 256 residues: uncharacterized protein (256 aa).

The tract at residues 1 to 23 (MIPPCENAPHIIYHESQRGTRDR) is disordered. Positions 12–23 (IYHESQRGTRDR) are enriched in basic and acidic residues.

This is an uncharacterized protein from Homo sapiens (Human).